The chain runs to 354 residues: Glycine betaine/proline betaine transport system permease protein ProW (354 aa).

The interval 1–41 is disordered; it reads MADQNNPWDTTPAADSAAQSADAWGTPTTAPTDGGGADWLT. At 1–99 the chain is on the cytoplasmic side; it reads MADQNNPWDT…VDYILNGFQQ (99 aa). Residues 13 to 32 are compositionally biased toward low complexity; sequence AADSAAQSADAWGTPTTAPT. The helical transmembrane segment at 100 to 120 threads the bilayer; it reads LLLGMPAPVAIIVFALIAWQI. A topological domain (periplasmic) is located at residue Ser121. A helical transmembrane segment spans residues 122–142; the sequence is GVGMGVATLVSLIAIGAIGAW. Residues 143 to 148 lie on the Cytoplasmic side of the membrane; it reads SQAMVT. The region spanning 145-324 is the ABC transmembrane type-1 domain; it reads AMVTLALVLT…ILAIILDRLT (180 aa). Residues 149-169 form a helical membrane-spanning segment; that stretch reads LALVLTALLFCIVIGLPLGIW. At 170 to 198 the chain is on the periplasmic side; the sequence is LARSPRAAKIIRPLLDAMQTTPAFVYLVP. Residues 199-219 traverse the membrane as a helical segment; it reads IVMLFGIGNVPGVVVTIIFAL. Topologically, residues 220–270 are cytoplasmic; the sequence is PPIIRLTILGINQVPADLIEASRSFGASPRQMLFKVQLPLAMPTIMAGVNQ. The helical transmembrane segment at 271–291 threads the bilayer; sequence TLMLALSMVVIASMIAVGGLG. Residues 292–300 are Periplasmic-facing; that stretch reads QMVLRGIGR. A helical membrane pass occupies residues 301-321; sequence LDMGLATVGGVGIVILAIILD. Residues 322-354 lie on the Cytoplasmic side of the membrane; it reads RLTQAVGRDSRSRGNRRWYTTGPVGLLTRPFIK.

It belongs to the binding-protein-dependent transport system permease family. CysTW subfamily. As to quaternary structure, the complex is composed of two ATP-binding proteins (ProV), two transmembrane proteins (ProW) and a solute-binding protein (ProX).

The protein resides in the cell inner membrane. In terms of biological role, part of the ProU ABC transporter complex involved in glycine betaine and proline betaine uptake. Probably responsible for the translocation of the substrate across the membrane. This chain is Glycine betaine/proline betaine transport system permease protein ProW, found in Escherichia coli (strain K12).